Consider the following 856-residue polypeptide: Beta-galactosidase 3 (856 aa).

Positions M1–C31 are cleaved as a signal peptide. Catalysis depends on E189, which acts as the Proton donor. Residue E258 is the Nucleophile of the active site. A glycan (N-linked (GlcNAc...) asparagine) is linked at N468. One can recognise an SUEL-type lectin domain in the interval T760–A846.

The protein belongs to the glycosyl hydrolase 35 family. Ubiquitous.

It localises to the secreted. Its subcellular location is the extracellular space. The protein resides in the apoplast. The enzyme catalyses Hydrolysis of terminal non-reducing beta-D-galactose residues in beta-D-galactosides.. The polypeptide is Beta-galactosidase 3 (BGAL3) (Arabidopsis thaliana (Mouse-ear cress)).